Consider the following 249-residue polypeptide: Proteasome subunit alpha type-3 (249 aa).

This sequence belongs to the peptidase T1A family. In terms of assembly, the 26S proteasome consists of a 20S proteasome core and two 19S regulatory subunits. The 20S proteasome core is composed of 28 subunits that are arranged in four stacked rings, resulting in a barrel-shaped structure. The two end rings are each formed by seven alpha subunits, and the two central rings are each formed by seven beta subunits. The catalytic chamber with the active sites is on the inside of the barrel.

It localises to the cytoplasm. The protein localises to the nucleus. Its function is as follows. The proteasome is a multicatalytic proteinase complex which is characterized by its ability to cleave peptides with Arg, Phe, Tyr, Leu, and Glu adjacent to the leaving group at neutral or slightly basic pH. The proteasome has an ATP-dependent proteolytic activity. The protein is Proteasome subunit alpha type-3 (PAG1) of Spinacia oleracea (Spinach).